A 502-amino-acid polypeptide reads, in one-letter code: MKGKLTGKDKLIVDEFEELGEQESDIDEFDLLEGDEKLPGDSELDKTTSIYPPETSWEVNKGMNSSRLHKLYSLFFDKSSAFYLGDDVSVLEDKPLTGAYGFQSKKNDQQIFLFRPDSDYVAGYHVDAKSDAGWVNDKLDRRLSEISEFCSKATQPATFILPFVEMPTDITKGVQHQVLLTISYDPKSKQLTPTVYDSIGRDTYSESLSSYFKGKYRTTCDEILTQSIEKAIKSTDFTLGKFTRAAYNHQNRLTEGNCGSYTFRTIKEVISSSAQGTEVKIPGSGYITSNSYLTSQHVQDIESCIKYRNLGVVDIESALTEGKTLPVQLSEFIVALEDYGKLRSQQSEKSMLNFIGYSKTAKLTAVELLIGILNDIKGKNEISESQYDKLVKEVDCLMDSSLGKLVQFHLKNLGAESLQKLVLPCVKFDDTIDDFVTIEKDELFDVPDITGEELASKKGIEQGALDKEALLKQKQIKTDLLDLREEDKTGLKKPLHGGIKVK.

2 consecutive short sequence motifs (LIR) follow at residues 9–23 (DKLIVDEFEELGEQE) and 23–37 (ESDIDEFDLLEGDEK). The segment at 49 to 325 (SIYPPETSWE…ESALTEGKTL (277 aa)) is catalytic region. Active-site residues include His176 and Asp197. The interval 211 to 217 (YFKGKYR) is alpha-3 helix. Cys258 is an active-site residue. The membrane targeting region stretch occupies residues 326–431 (PVQLSEFIVA…VLPCVKFDDT (106 aa)). The LIR 3 motif lies at 429 to 443 (DDTIDDFVTIEKDEL).

It localises to the secreted. The protein localises to the host cytoplasmic vesicle membrane. The catalysed reaction is [protein]-C-terminal L-amino acid-glycyl-phosphatidylethanolamide + H2O = a 1,2-diacyl-sn-glycero-3-phosphoethanolamine-N-glycine + [protein]-C-terminal &lt;stereo&gt;L-&lt;/stereo&gt;amino acid. It catalyses the reaction [protein]-C-terminal L-amino acid-glycyl-phosphatidylserine + H2O = 1,2-diacyl-sn-glycero-3-phospho-L-serine-N-glycine + [protein]-C-terminal &lt;stereo&gt;L-&lt;/stereo&gt;amino acid. Its function is as follows. Cysteine protease effector that inhibits host cell autophagy by targeting lipid-conjugated ATG8 family proteins on pre-autophagosomal structures. Specifically hydrolyzes the amide bond between the C-terminal glycine residue and an adjacent aromatic residue in ATG8 proteins conjugated to phosphatidylethanolamine (PE), producing an ATG8 protein that cannot be reconjugated by host ATG7 and ATG3. Mechanistically, Ravz interacts with ATG8 proteins conjugated to PE via its LIR motifs, extracts them from the membrane of autophagosomes and integrates the PE part into its own lipid-binding site. It then removes the lipid component of the ATG8 protein. Also able to mediate delipidation of ATG8 proteins conjugated to phosphatidylserine (PS) during non-canonical autophagy. Inhibits host ubiquitin recruitment to bacteria-containing vacuoles, suggesting that it is able to mediate delipidation of other proteins in addition to ATG8 proteins. It is however not involved in the exclusion of autophagy adapters from bacteria-containing vacuoles decorated with ubiquitin. This Legionella pneumophila subsp. pneumophila (strain Philadelphia 1 / ATCC 33152 / DSM 7513) protein is Cysteine protease RavZ.